The primary structure comprises 312 residues: Olfactory receptor 6C74 (312 aa).

The Extracellular segment spans residues 1–23 (MRNHTTVANFILLGLTDDPQLQV). A glycan (N-linked (GlcNAc...) asparagine) is linked at N3. Residues 24-44 (IIFLLLFFTYMLSITGNLTII) form a helical membrane-spanning segment. Residues 45–63 (TLTLLDLHLKTPMYFFLRN) are Cytoplasmic-facing. A helical membrane pass occupies residues 64–84 (FSFLEVSFTTVYIPKFLVSMA). The Extracellular segment spans residues 85 to 95 (TGDKTISYNDC). C95 and C177 are joined by a disulfide. The helical transmembrane segment at 96-116 (AAQLFFTILLGATEFFLLAAM) threads the bilayer. Over 117 to 140 (SYERYVAICKPLHYTTIMSSRVCS) the chain is Cytoplasmic. A helical transmembrane segment spans residues 141–161 (LLVFASWMAGFLIIFPPLLMG). The Extracellular segment spans residues 162 to 194 (LQLDFCAANTVDHFFCDVSPILQLSCTDTDIIE). Residues 195-215 (LMMLLSAILTLLVTLVLVILS) form a helical membrane-spanning segment. Residues 216 to 237 (YTNIIRTILKIPSSQQRKKAFS) lie on the Cytoplasmic side of the membrane. A helical membrane pass occupies residues 238 to 258 (TCSSHMVVVSISYGSCIFMYV). Over 259 to 269 (KPSAKERVSLN) the chain is Extracellular. Residues 270–290 (KGIALLSTSVAPMLNPFIYTL) form a helical membrane-spanning segment. Residues 291-312 (RNKQVKDVFKHTVKKIELFSMK) lie on the Cytoplasmic side of the membrane.

The protein belongs to the G-protein coupled receptor 1 family.

It localises to the cell membrane. Functionally, odorant receptor. The protein is Olfactory receptor 6C74 (OR6C74) of Homo sapiens (Human).